A 428-amino-acid polypeptide reads, in one-letter code: Histone deacetylase 3 (428 aa).

A histone deacetylase region spans residues Lys-3 to Glu-316. 1D-myo-inositol 1,4,5,6-tetrakisphosphate is bound by residues His-17, Gly-21, and Lys-25. Residue His-135 is part of the active site. Zn(2+)-binding residues include Asp-170, His-172, and Asp-259. Arg-265 is a binding site for 1D-myo-inositol 1,4,5,6-tetrakisphosphate. Basic and acidic residues-rich tracts occupy residues Asp-388–Ser-405 and Asp-415–Ile-428. Positions Asp-388 to Ile-428 are disordered. Ser-424 carries the post-translational modification Phosphoserine.

It belongs to the histone deacetylase family. HD type 1 subfamily. In terms of assembly, interacts with HDAC7 and HDAC9. Interacts with HDAC10, DAXX and DACH1. Found in a complex with NCOR1 and NCOR2. Component of the N-Cor repressor complex, at least composed of NCOR1, NCOR2, HDAC3, TBL1X, TBL1R, CORO2A and GPS2. Interacts with BCOR, MJD2A/JHDM3A, NRIP1, PRDM6 and SRY. Interacts with BTBD14B. Interacts with GLIS2. Interacts (via the DNA-binding domain) with NR2C1; the interaction recruits phosphorylated NR2C1 to PML bodies for sumoylation. Component of the Notch corepressor complex. Interacts with CBFA2T3 and NKAP. Interacts with APEX1; the interaction is not dependent on the acetylated status of APEX1. Interacts with and deacetylates MAPK14. Interacts with ZMYND15. Interacts with SMRT/NCOR2 and BCL6 on DNA enhancer elements. Interacts with INSM1. Interacts with XBP1; the interaction occurs in endothelial cell (EC) under disturbed flow. Interacts (via C-terminus) with CCAR2 (via N-terminus). Interacts with and deacetylates MEF2D. Interacts with BEND3. Interacts with NKAPL. Interacts with DHX36; this interaction occurs in a RNA-dependent manner. Interacts weakly with CRY1; this interaction is enhanced in the presence of FBXL3. Interacts with FBXL3 and BMAL1. Interacts with NCOR1. Interacts with RARA. Interacts with SETD5. Deubiquitinated on 'Lys-63'-linked ubiquitin chains by USP38; leading to a decreased level of histone acetylation. In terms of processing, sumoylated in vitro.

Its subcellular location is the nucleus. It localises to the chromosome. The protein resides in the cytoplasm. The protein localises to the cytosol. It carries out the reaction N(6)-acetyl-L-lysyl-[histone] + H2O = L-lysyl-[histone] + acetate. It catalyses the reaction N(6)-acetyl-L-lysyl-[protein] + H2O = L-lysyl-[protein] + acetate. The catalysed reaction is N(6)-(2E)-butenoyl-L-lysyl-[protein] + H2O = (2E)-2-butenoate + L-lysyl-[protein]. The enzyme catalyses N(6)-(2-hydroxyisobutanoyl)-L-lysyl-[protein] + H2O = 2-hydroxy-2-methylpropanoate + L-lysyl-[protein]. It carries out the reaction N(6)-[(S)-lactoyl]-L-lysyl-[protein] + H2O = (S)-lactate + L-lysyl-[protein]. Its activity is regulated as follows. Inositol tetraphosphate (1D-myo-inositol 1,4,5,6-tetrakisphosphate) promotes the histone deacetylase activity by acting as an intermolecular glue between HDAC3 and NCOR2, thereby promoting its association with the N-Cor complex, a prerequisite for the histone deacetylase activity. In terms of biological role, histone deacetylase that catalyzes the deacetylation of lysine residues on the N-terminal part of the core histones (H2A, H2B, H3 and H4), and some other non-histone substrates. Histone deacetylation gives a tag for epigenetic repression and plays an important role in transcriptional regulation, cell cycle progression and developmental events. Histone deacetylases act via the formation of large multiprotein complexes, such as N-Cor repressor complex, which activate the histone deacetylase activity. Participates in the BCL6 transcriptional repressor activity by deacetylating the H3 'Lys-27' (H3K27) on enhancer elements, antagonizing EP300 acetyltransferase activity and repressing proximal gene expression. Acts as a molecular chaperone for shuttling phosphorylated NR2C1 to PML bodies for sumoylation. Contributes, together with XBP1 isoform 1, to the activation of NFE2L2-mediated HMOX1 transcription factor gene expression in a PI(3)K/mTORC2/Akt-dependent signaling pathway leading to endothelial cell (EC) survival under disturbed flow/oxidative stress. Regulates both the transcriptional activation and repression phases of the circadian clock in a deacetylase activity-independent manner. During the activation phase, promotes the accumulation of ubiquitinated BMAL1 at the E-boxes and during the repression phase, blocks FBXL3-mediated CRY1/2 ubiquitination and promotes the interaction of CRY1 and BMAL1. The NCOR1-HDAC3 complex regulates the circadian expression of the core clock gene BMAL1 and the genes involved in lipid metabolism in the liver. Also functions as a deacetylase for non-histone targets, such as KAT5, MEF2D, MAPK14, RARA and STAT3. Serves as a corepressor of RARA, mediating its deacetylation and repression, leading to inhibition of RARE DNA element binding. In association with RARA, plays a role in the repression of microRNA-10a and thereby in the inflammatory response. In addition to protein deacetylase activity, also acts as a protein-lysine deacylase by recognizing other acyl groups: catalyzes removal of (2E)-butenoyl (crotonyl), lactoyl (lactyl) and 2-hydroxyisobutanoyl (2-hydroxyisobutyryl) acyl groups from lysine residues, leading to protein decrotonylation, delactylation and de-2-hydroxyisobutyrylation, respectively. Catalyzes decrotonylation of MAPRE1/EB1. Mediates delactylation NBN/NBS1, thereby inhibiting DNA double-strand breaks (DSBs) via homologous recombination (HR). This is Histone deacetylase 3 (HDAC3) from Pongo abelii (Sumatran orangutan).